A 495-amino-acid chain; its full sequence is uncharacterized protein (495 aa).

In terms of domain architecture, TRAM spans Ser-16–Glu-74. Cys-88, Cys-94, Cys-97, and Cys-175 together coordinate [4Fe-4S] cluster. S-adenosyl-L-methionine is bound by residues Gln-299, Tyr-328, Glu-349, and Asn-397. Cys-424 functions as the Nucleophile in the catalytic mechanism. Positions Asp-472–Arg-483 are enriched in basic and acidic residues. Residues Asp-472–Val-495 form a disordered region. Positions Pro-484–Val-495 are enriched in basic residues.

Belongs to the class I-like SAM-binding methyltransferase superfamily. RNA M5U methyltransferase family.

This is an uncharacterized protein from Geobacter sulfurreducens (strain ATCC 51573 / DSM 12127 / PCA).